The chain runs to 455 residues: Homogentisate 1,2-dioxygenase (455 aa).

H308 acts as the Proton acceptor in catalysis. Residues H351 and E357 each coordinate Fe cation. Positions 366 and 387 each coordinate homogentisate. Position 387 (H387) interacts with Fe cation.

Belongs to the homogentisate dioxygenase family. In terms of assembly, hexamer; dimer of trimers. The cofactor is Fe cation.

It carries out the reaction homogentisate + O2 = 4-maleylacetoacetate + H(+). It participates in amino-acid degradation; L-phenylalanine degradation; acetoacetate and fumarate from L-phenylalanine: step 4/6. Functionally, involved in the catabolism of homogentisate (2,5-dihydroxyphenylacetate or 2,5-OH-PhAc), a central intermediate in the degradation of phenylalanine and tyrosine. Catalyzes the oxidative ring cleavage of the aromatic ring of homogentisate to yield maleylacetoacetate. The chain is Homogentisate 1,2-dioxygenase from Xanthomonas campestris pv. campestris (strain 8004).